We begin with the raw amino-acid sequence, 350 residues long: Secreted effector protein PipB2 (350 aa).

Pentapeptide repeat domains follow at residues Ala162–Gly201, Thr202–Gly241, Cys247–Gly286, and Ala287–Asp326.

As to quaternary structure, interacts with the host kinesin light chain (KLC), a subunit of the kinesin-1 motor complex.

It is found in the secreted. The protein resides in the host membrane. Effector proteins function to alter host cell physiology and promote bacterial survival in host tissues. Involved in the reorganization of late endosome/lysosome (LE/Lys) compartments in mammalian cells. Necessary and sufficient to link kinesin-1 onto the Salmonella-containing vacuole (SCV) membrane. Required for centrifugal extension of lysosomal glycoprotein-rich membrane tubules, known as Salmonella-induced filaments (Sifs), away from the SCV and toward the cell periphery. Required for virulence, but not for intracellular survival and replication in phagocytic cells. This Salmonella typhimurium (strain LT2 / SGSC1412 / ATCC 700720) protein is Secreted effector protein PipB2 (pipB2).